A 128-amino-acid chain; its full sequence is Sulfurtransferase TusD (128 aa).

Residue C78 is the Cysteine persulfide intermediate of the active site.

Belongs to the DsrE/TusD family. In terms of assembly, heterohexamer, formed by a dimer of trimers. The hexameric TusBCD complex contains 2 copies each of TusB, TusC and TusD. The TusBCD complex interacts with TusE.

It is found in the cytoplasm. In terms of biological role, part of a sulfur-relay system required for 2-thiolation of 5-methylaminomethyl-2-thiouridine (mnm(5)s(2)U) at tRNA wobble positions. Accepts sulfur from TusA and transfers it in turn to TusE. This Klebsiella pneumoniae (strain 342) protein is Sulfurtransferase TusD.